A 510-amino-acid chain; its full sequence is NAD(P)H-quinone oxidoreductase subunit 2 A, chloroplastic (510 aa).

The next 12 helical transmembrane spans lie at 31–51 (FIFP…IDLT), 59–79 (WFYF…LFRW), 99–119 (IFQF…VEYI), 124–144 (MAIT…MFLC), 149–169 (LITI…LSGY), 183–203 (YLLM…WLYG), 229–249 (ISIA…PAPF), 295–315 (WHLL…LLAI), 323–343 (MLAY…IVGD), 354–374 (YMLF…LFGL), 395–415 (ALSL…AGFF), and 418–438 (LYLF…IGLL).

Belongs to the complex I subunit 2 family. NDH is composed of at least 16 different subunits, 5 of which are encoded in the nucleus.

The protein localises to the plastid. It localises to the chloroplast thylakoid membrane. The enzyme catalyses a plastoquinone + NADH + (n+1) H(+)(in) = a plastoquinol + NAD(+) + n H(+)(out). It carries out the reaction a plastoquinone + NADPH + (n+1) H(+)(in) = a plastoquinol + NADP(+) + n H(+)(out). In terms of biological role, NDH shuttles electrons from NAD(P)H:plastoquinone, via FMN and iron-sulfur (Fe-S) centers, to quinones in the photosynthetic chain and possibly in a chloroplast respiratory chain. The immediate electron acceptor for the enzyme in this species is believed to be plastoquinone. Couples the redox reaction to proton translocation, and thus conserves the redox energy in a proton gradient. The protein is NAD(P)H-quinone oxidoreductase subunit 2 A, chloroplastic of Saccharum officinarum (Sugarcane).